Here is a 533-residue protein sequence, read N- to C-terminus: Beta-apo-4'-carotenal oxygenase (533 aa).

Catalysis depends on residues Glu226 and Cys260.

The protein belongs to the aldehyde dehydrogenase family.

The catalysed reaction is 4'-apo-beta-carotenal + NAD(+) + H2O = neurosporaxanthin + NADH + 2 H(+). In terms of biological role, beta-apo-4'-carotenal oxygenase involved in the last step of synthesis of neurosporaxanthin, a carboxylic apocarotenoid acting as an essential protective pigment and leading to orange pigmentation. Converts the aldehyde beta-apo-4'-carotenal into neurosporaxanthin. Neurosporaxanthin is synthesized from geranyl-geranyl pyrophosphate (GGPP) through several enzymatic activities. Phytoene synthase activity performed by the bifunctional enzyme al-2 first produces phytoene from geranyl-geranyl pyrophosphate (GGPP). The phytoene dehydrogenase al-1 then introduces 5 desaturations to lead to 3,4-didehydrolycopene via the intermediates phytofluene, zeta-carotene, neurosporene and lycopene. Al-2 cyclase activity then converts 3,4-didehydrolycopene into torulene. Al-2 can also convet lycopene into gamma-carotene which in turn is converted to beta-carotene by an additional al-2 cyclization reaction. Torulene is the substrate of the dioxidase cao-2 that breaks the molecule, removing five carbon atoms to yield beta-apo-4'-carotenal, whereas the aldehyde dehydrogenase ylo-1 mediates the last step by converting beta-apo-4'-carotenal into neurosporaxanthin. The protein is Beta-apo-4'-carotenal oxygenase of Neurospora crassa (strain ATCC 24698 / 74-OR23-1A / CBS 708.71 / DSM 1257 / FGSC 987).